Here is a 191-residue protein sequence, read N- to C-terminus: Imidazoleglycerol-phosphate dehydratase (191 aa).

The protein belongs to the imidazoleglycerol-phosphate dehydratase family.

It localises to the cytoplasm. The enzyme catalyses D-erythro-1-(imidazol-4-yl)glycerol 3-phosphate = 3-(imidazol-4-yl)-2-oxopropyl phosphate + H2O. It functions in the pathway amino-acid biosynthesis; L-histidine biosynthesis; L-histidine from 5-phospho-alpha-D-ribose 1-diphosphate: step 6/9. This is Imidazoleglycerol-phosphate dehydratase from Methanococcoides burtonii (strain DSM 6242 / NBRC 107633 / OCM 468 / ACE-M).